The chain runs to 426 residues: D-tagatose-1,6-bisphosphate aldolase subunit KbaZ (426 aa).

This sequence belongs to the GatZ/KbaZ family. KbaZ subfamily. Forms a complex with KbaY.

It participates in carbohydrate metabolism; D-tagatose 6-phosphate degradation; D-glyceraldehyde 3-phosphate and glycerone phosphate from D-tagatose 6-phosphate: step 2/2. Component of the tagatose-1,6-bisphosphate aldolase KbaYZ that is required for full activity and stability of the Y subunit. Could have a chaperone-like function for the proper and stable folding of KbaY. When expressed alone, KbaZ does not show any aldolase activity. In Escherichia coli O81 (strain ED1a), this protein is D-tagatose-1,6-bisphosphate aldolase subunit KbaZ.